The chain runs to 120 residues: UPF0102 protein NT01CX_2205 (120 aa).

This sequence belongs to the UPF0102 family.

The chain is UPF0102 protein NT01CX_2205 from Clostridium novyi (strain NT).